A 147-amino-acid chain; its full sequence is Hemoglobin subunit gamma-2 (147 aa).

One can recognise a Globin domain in the interval His3–His147. Phosphothreonine is present on Thr13. Phosphoserine occurs at positions 45, 51, and 53. Lys60 bears the N6-acetyllysine mark. A heme b-binding site is contributed by His64. At Lys83 the chain carries N6-acetyllysine. His93 provides a ligand contact to heme b. Cys94 carries the S-nitrosocysteine modification. Phosphoserine is present on residues Ser140, Ser143, and Ser144.

This sequence belongs to the globin family. In terms of assembly, heterotetramer of two alpha chains and two gamma chains in fetal hemoglobin (Hb F). Red blood cells.

Gamma chains make up the fetal hemoglobin F, in combination with alpha chains. The polypeptide is Hemoglobin subunit gamma-2 (HBG2) (Hylobates lar (Lar gibbon)).